We begin with the raw amino-acid sequence, 154 residues long: Ribosome maturation factor RimP (154 aa).

It belongs to the RimP family.

Its subcellular location is the cytoplasm. Its function is as follows. Required for maturation of 30S ribosomal subunits. This is Ribosome maturation factor RimP from Hydrogenobaculum sp. (strain Y04AAS1).